A 432-amino-acid chain; its full sequence is Adenylosuccinate synthetase (432 aa).

GTP-binding positions include 11–17 (GDEGKGK) and 39–41 (GHT). Asp-12 (proton acceptor) is an active-site residue. The Mg(2+) site is built by Asp-12 and Gly-39. IMP contacts are provided by residues 12-15 (DEGK), 37-40 (NAGH), Thr-134, Arg-148, Asn-230, Thr-245, and Arg-309. His-40 acts as the Proton donor in catalysis. 305-311 (VTTGRKR) is a substrate binding site. Residues Arg-311, 337–339 (KLD), and 419–421 (GTG) contribute to the GTP site.

The protein belongs to the adenylosuccinate synthetase family. In terms of assembly, homodimer. The cofactor is Mg(2+).

It localises to the cytoplasm. The enzyme catalyses IMP + L-aspartate + GTP = N(6)-(1,2-dicarboxyethyl)-AMP + GDP + phosphate + 2 H(+). It functions in the pathway purine metabolism; AMP biosynthesis via de novo pathway; AMP from IMP: step 1/2. In terms of biological role, plays an important role in the de novo pathway and in the salvage pathway of purine nucleotide biosynthesis. Catalyzes the first committed step in the biosynthesis of AMP from IMP. This Kluyveromyces lactis (strain ATCC 8585 / CBS 2359 / DSM 70799 / NBRC 1267 / NRRL Y-1140 / WM37) (Yeast) protein is Adenylosuccinate synthetase.